Consider the following 83-residue polypeptide: Small ribosomal subunit protein bS16 (83 aa).

The protein belongs to the bacterial ribosomal protein bS16 family.

This Pseudomonas aeruginosa (strain LESB58) protein is Small ribosomal subunit protein bS16.